The primary structure comprises 1131 residues: Filamin A-interacting protein 1-like (1131 aa).

Residues 1 to 62 (MRSRSSNAEG…KSHTGKGHHT (62 aa)) form a disordered region. A compositionally biased stretch (basic and acidic residues) spans 50–62 (VSEKSHTGKGHHT). 2 coiled-coil regions span residues 139-583 (NELD…LSKV) and 610-780 (SKST…KSLR). A Phosphoserine modification is found at serine 789. Residues threonine 984 and threonine 992 each carry the phosphothreonine modification. Serine 1050 bears the Phosphoserine mark.

This sequence belongs to the FILIP1 family.

The protein localises to the cytoplasm. It localises to the membrane. It is found in the nucleus. Its function is as follows. Acts as a regulator of the antiangiogenic activity on endothelial cells. When overexpressed in endothelial cells, leads to inhibition of cell proliferation and migration and an increase in apoptosis. Inhibits melanoma growth When expressed in tumor-associated vasculature. This Mus musculus (Mouse) protein is Filamin A-interacting protein 1-like (Filip1l).